The following is a 60-amino-acid chain: Large ribosomal subunit protein bL32 (60 aa).

Positions 1-23 (MAKHPVPKKKTSKSKRDMRRSHH) are enriched in basic residues. The disordered stretch occupies residues 1-26 (MAKHPVPKKKTSKSKRDMRRSHHALT).

It belongs to the bacterial ribosomal protein bL32 family.

The polypeptide is Large ribosomal subunit protein bL32 (Deinococcus deserti (strain DSM 17065 / CIP 109153 / LMG 22923 / VCD115)).